A 638-amino-acid polypeptide reads, in one-letter code: Nucleolar protein 4 (638 aa).

Disordered stretches follow at residues 210–312, 343–403, 503–535, and 573–603; these read QQDE…SPLS, EREA…TDGV, NAAKRMRLERQQDESAPADKQCKPEATQATYST, and SSGPTDLSMKRQLATSSGSSSSSNSRPQLSP. Acidic residues predominate over residues 211 to 225; sequence QDEDESSIESDEFDM. 4 stretches are compositionally biased toward polar residues: residues 229–254, 263–281, 302–312, and 351–363; these read TRMSAVNSDLSSNLEERMQSPQNLHG, ESFNGNETLGHSSIASGGT, QPLNLSDSPLS, and SKSPAHSYSSYDS. Composition is skewed to basic and acidic residues over residues 364–374, 391–403, and 503–515; these read GKNESVDRGAE, HDDSEKVNETDGV, and NAAKRMRLERQQD. Residues 588–597 show a composition bias toward low complexity; it reads SSGSSSSSNS.

In terms of tissue distribution, expressed predominantly in fetal brain, adult brain and testis.

The protein resides in the nucleus. Its subcellular location is the nucleolus. In Homo sapiens (Human), this protein is Nucleolar protein 4 (NOL4).